The following is a 503-amino-acid chain: Maturase K (503 aa).

It belongs to the intron maturase 2 family. MatK subfamily.

Its subcellular location is the plastid. The protein localises to the chloroplast. Functionally, usually encoded in the trnK tRNA gene intron. Probably assists in splicing its own and other chloroplast group II introns. In Liquidambar styraciflua (Sweetgum tree), this protein is Maturase K.